The chain runs to 156 residues: MIQSQINRNIRLDLADAILLSKAKKDLSFAEIADGTGLAEAFVTEALLGQQALPADAARLVGAKLDLDEDSILLLQMIPLRGCIDDRIPTDPTMYRFYEMLQVYGTTLKALVHEKFGDGIISAINFKLDVKKVADPEGGECAVITLDGKYLPTKPF.

Residues R96, E99, and S122 contribute to the active site.

Belongs to the cyanase family.

The catalysed reaction is cyanate + hydrogencarbonate + 3 H(+) = NH4(+) + 2 CO2. Functionally, catalyzes the reaction of cyanate with bicarbonate to produce ammonia and carbon dioxide. This Escherichia coli (strain ATCC 8739 / DSM 1576 / NBRC 3972 / NCIMB 8545 / WDCM 00012 / Crooks) protein is Cyanate hydratase.